Here is a 73-residue protein sequence, read N- to C-terminus: uncharacterized protein (73 aa).

The first 23 residues, 1–23, serve as a signal peptide directing secretion; sequence MLHLIKMVSKIVLLITLVFIVSA.

This is an uncharacterized protein from Acheta domesticus (House cricket).